The primary structure comprises 302 residues: Sulfate adenylyltransferase subunit 2 (302 aa).

The protein belongs to the PAPS reductase family. CysD subfamily. Heterodimer composed of CysD, the smaller subunit, and CysN.

It carries out the reaction sulfate + ATP + H(+) = adenosine 5'-phosphosulfate + diphosphate. The protein operates within sulfur metabolism; hydrogen sulfide biosynthesis; sulfite from sulfate: step 1/3. Functionally, with CysN forms the ATP sulfurylase (ATPS) that catalyzes the adenylation of sulfate producing adenosine 5'-phosphosulfate (APS) and diphosphate, the first enzymatic step in sulfur assimilation pathway. APS synthesis involves the formation of a high-energy phosphoric-sulfuric acid anhydride bond driven by GTP hydrolysis by CysN coupled to ATP hydrolysis by CysD. The protein is Sulfate adenylyltransferase subunit 2 of Methylococcus capsulatus (strain ATCC 33009 / NCIMB 11132 / Bath).